A 473-amino-acid chain; its full sequence is GTPase Der (473 aa).

2 EngA-type G domains span residues 3 to 167 and 203 to 378; these read FKVA…KGLE and LRVA…TFWN. Residues 9–16, 56–60, 119–122, 209–216, 256–260, and 321–324 each bind GTP; these read GRPNVGKS, DTAGL, NKCE, DTAGM, and NKWD. In terms of domain architecture, KH-like spans 379–463; sequence ARVPTARLNR…PIRLFMRKTH (85 aa).

This sequence belongs to the TRAFAC class TrmE-Era-EngA-EngB-Septin-like GTPase superfamily. EngA (Der) GTPase family. Associates with the 50S ribosomal subunit.

In terms of biological role, GTPase that plays an essential role in the late steps of ribosome biogenesis. The polypeptide is GTPase Der (Parvibaculum lavamentivorans (strain DS-1 / DSM 13023 / NCIMB 13966)).